A 258-amino-acid chain; its full sequence is Methylthioribulose-1-phosphate dehydratase (258 aa).

Residues 1–20 show a composition bias toward polar residues; sequence MTPPSNGQAAETNDHLVQSD. Residues 1–21 are disordered; it reads MTPPSNGQAAETNDHLVQSDN. C105 is a binding site for substrate. Zn(2+) is bound by residues H123 and H125. The active-site Proton donor/acceptor is the E153. H210 contributes to the Zn(2+) binding site.

Belongs to the aldolase class II family. MtnB subfamily. Zn(2+) serves as cofactor.

The protein localises to the cytoplasm. It catalyses the reaction 5-(methylsulfanyl)-D-ribulose 1-phosphate = 5-methylsulfanyl-2,3-dioxopentyl phosphate + H2O. Its pathway is amino-acid biosynthesis; L-methionine biosynthesis via salvage pathway; L-methionine from S-methyl-5-thio-alpha-D-ribose 1-phosphate: step 2/6. Functionally, catalyzes the dehydration of methylthioribulose-1-phosphate (MTRu-1-P) into 2,3-diketo-5-methylthiopentyl-1-phosphate (DK-MTP-1-P). In Chaetomium globosum (strain ATCC 6205 / CBS 148.51 / DSM 1962 / NBRC 6347 / NRRL 1970) (Soil fungus), this protein is Methylthioribulose-1-phosphate dehydratase.